A 495-amino-acid polypeptide reads, in one-letter code: UDP-glycosyltransferase 73E1 (495 aa).

UDP-alpha-D-glucose contacts are provided by residues serine 299, 355–356, 373–381, and 395–398; these read WA, HCGWNSTIE, and FADQ.

This sequence belongs to the UDP-glycosyltransferase family.

May glycosylate diterpenes or flavonols in leaves. The sequence is that of UDP-glycosyltransferase 73E1 from Stevia rebaudiana (Stevia).